The primary structure comprises 752 residues: MFIEVEKFVEARTNSIAQLLKAIDNDALVSGEVTKGPRTAAQRLPRHMRRRAMAYDIRRFPRTMREFAAAHLISKHAKKCPSRFARRKSANSRTKFGRSTSTKGIWLSTHVWHAKRFRMIQKWGFKLADRSFQRGFRAVLRDSNKNCVIRDRSYYTCVTIQCTDAYSKISQFSQKGCRGQSSRDEEEECHQLYMPGKYPFGYIGPARFQRLSGDKVHIWIHPSSKLQFMKALLEYYNLEKQENTEEDLYKNSEIKVSIDAENICRFHLSGPKCLSKLRDSIRFVNDEKFSSEHNYFLSVSDSVFQSSRDGEVINLLIEDPRTTWDRKTVLKHKKVNKEADNERIRVSKFWNKEFREMAIEKRMADSEFHKQNSSKINGVISTEAKVPIILIIRNEGLKALDGADILIPEPFAKDFWVSLQRRGVRASGLRDEYAAHLESKALYYPLDDVGSEAGRESELAMKKELIEKYLGKPHNRRCKHWSAVSVKYPFEFKWDELSQDWNLSNKPRSEAFVCRDLQKLRIIEEAMKKGSGLEEFQEPGMLIPVKLQFFGRGRPKKYGMVCLPTDDDLISIRKNRNREIIQTPPEASSQDSDIVEAMEIEEITVKKNQGFMSLEAAASEKPINLKLLFEETTKLDDKTTKRKRVNRKKRESKKRRKIEQEKRKEEAEVEEVQKLATKYRFSANREIIGRLVAGEQSVLAGHGVGIGYICANTLSLIASNYHKSKTVVMVRNSTSKYYHPAYVTILKNATKI.

The interval 638-663 (KTTKRKRVNRKKRESKKRRKIEQEKR) is disordered. Residues 640-657 (TKRKRVNRKKRESKKRRK) show a composition bias toward basic residues.

Component of nuclear RNase P and RNase MRP ribonucleoproteins. Several subunits of RNase P are also part of the RNase MRP complex.

The protein resides in the nucleus. Its subcellular location is the nucleolus. The enzyme catalyses Endonucleolytic cleavage of RNA, removing 5'-extranucleotides from tRNA precursor.. Component of ribonuclease P, a ribonucleoprotein complex that generates mature tRNA molecules by cleaving their 5'-ends. Also a component of the MRP ribonuclease complex, which cleaves pre-rRNA sequences. The polypeptide is Ribonucleases P/MRP protein subunit popl-1 (Caenorhabditis elegans).